The following is a 1092-amino-acid chain: Isoleucine--tRNA ligase (1092 aa).

The short motif at 53-63 (PFANGLPHYGH) is the 'HIGH' region element. A 'KMSKS' region motif is present at residues 613-617 (KLSKR). Residue lysine 616 participates in ATP binding.

It belongs to the class-I aminoacyl-tRNA synthetase family. IleS type 2 subfamily. Monomer. Zn(2+) serves as cofactor.

Its subcellular location is the cytoplasm. It catalyses the reaction tRNA(Ile) + L-isoleucine + ATP = L-isoleucyl-tRNA(Ile) + AMP + diphosphate. Catalyzes the attachment of isoleucine to tRNA(Ile). As IleRS can inadvertently accommodate and process structurally similar amino acids such as valine, to avoid such errors it has two additional distinct tRNA(Ile)-dependent editing activities. One activity is designated as 'pretransfer' editing and involves the hydrolysis of activated Val-AMP. The other activity is designated 'posttransfer' editing and involves deacylation of mischarged Val-tRNA(Ile). The polypeptide is Isoleucine--tRNA ligase (Rickettsia conorii (strain ATCC VR-613 / Malish 7)).